The following is an 83-amino-acid chain: ATP synthase subunit c (83 aa).

2 helical membrane passes run isoleucine 10 to leucine 30 and methionine 52 to tyrosine 72.

This sequence belongs to the ATPase C chain family. As to quaternary structure, F-type ATPases have 2 components, F(1) - the catalytic core - and F(0) - the membrane proton channel. F(1) has five subunits: alpha(3), beta(3), gamma(1), delta(1), epsilon(1). F(0) has three main subunits: a(1), b(2) and c(10-14). The alpha and beta chains form an alternating ring which encloses part of the gamma chain. F(1) is attached to F(0) by a central stalk formed by the gamma and epsilon chains, while a peripheral stalk is formed by the delta and b chains.

The protein resides in the cell inner membrane. In terms of biological role, f(1)F(0) ATP synthase produces ATP from ADP in the presence of a proton or sodium gradient. F-type ATPases consist of two structural domains, F(1) containing the extramembraneous catalytic core and F(0) containing the membrane proton channel, linked together by a central stalk and a peripheral stalk. During catalysis, ATP synthesis in the catalytic domain of F(1) is coupled via a rotary mechanism of the central stalk subunits to proton translocation. Key component of the F(0) channel; it plays a direct role in translocation across the membrane. A homomeric c-ring of between 10-14 subunits forms the central stalk rotor element with the F(1) delta and epsilon subunits. The sequence is that of ATP synthase subunit c from Shewanella amazonensis (strain ATCC BAA-1098 / SB2B).